The following is a 539-amino-acid chain: Glycerophosphoinositol inositolphosphodiesterase GDPD2 (539 aa).

Topologically, residues 1 to 38 are cytoplasmic; sequence MAESPGCCSVWARCLHCLYSCHWRKCPRERMQTSKCDC. The helical transmembrane segment at 39-59 threads the bilayer; sequence IWFGLLFLTFLLSLSWLYIGL. Residues 60-85 lie on the Extracellular side of the membrane; that stretch reads VLLNDLHNFNEFLFRRWGHWMDWSLA. A helical transmembrane segment spans residues 86–106; the sequence is FLLVISLLVTYASLLLVLALL. Topologically, residues 107–121 are cytoplasmic; it reads LRLCRQPLHLHSLHK. A helical membrane pass occupies residues 122–142; the sequence is VLLLLIMLLVAAGLVGLDIQW. Topologically, residues 143–154 are extracellular; sequence QQEWHSLRVSLQ. Residues 155–175 traverse the membrane as a helical segment; the sequence is ATAPFLHIGAAAGIALLAWPV. Residues 176–188 lie on the Cytoplasmic side of the membrane; sequence ADTFYRIHRRGPK. A helical membrane pass occupies residues 189–209; the sequence is ILLLLLFFGVVLVIYLAPLCI. Topologically, residues 210–490 are extracellular; it reads SSPCIMEPRD…PIWLITPQTY (281 aa). The GP-PDE domain occupies 224–479; it reads PGLVGHRGAP…NDCQLLQQMR (256 aa). Residues E256, D258, and H271 each contribute to the a divalent metal cation site. N442 carries N-linked (GlcNAc...) asparagine glycosylation. Residues 491 to 511 form a helical membrane-spanning segment; that stretch reads LIIWVITNCVSTMLLLWTFLL. At 512–539 the chain is on the cytoplasmic side; that stretch reads QRRFVKKRGKTGLETAVLLTRINNFMME.

Belongs to the glycerophosphoryl diester phosphodiesterase family. Ca(2+) is required as a cofactor.

The protein localises to the cell membrane. It is found in the cytoplasm. It localises to the cytoskeleton. It catalyses the reaction sn-glycero-3-phospho-1D-myo-inositol + H2O = 1D-myo-inositol 1-phosphate + glycerol + H(+). In terms of biological role, has glycerophosphoinositol inositolphosphodiesterase activity and specifically hydrolyzes glycerophosphoinositol, with no activity for other substrates such as glycerophosphoinositol 4-phosphate, glycerophosphocholine, glycerophosphoethanolamine, and glycerophosphoserine. Accelerates the program of osteoblast differentiation and growth. May play a role in remodeling of the actin cytoskeleton. In Homo sapiens (Human), this protein is Glycerophosphoinositol inositolphosphodiesterase GDPD2 (GDPD2).